We begin with the raw amino-acid sequence, 182 residues long: Large ribosomal subunit protein uL22 (182 aa).

Positions 155–182 (SGVDGAKQGKKKKKTDGVEKATTKRQKQ) are disordered.

Belongs to the universal ribosomal protein uL22 family.

This chain is Large ribosomal subunit protein uL22 (RpL17), found in Carabus granulatus (Ground beetle).